We begin with the raw amino-acid sequence, 128 residues long: Fluoride-specific ion channel FluC (128 aa).

A run of 4 helical transmembrane segments spans residues 7-27 (LAIGIGGFIGAILRAYTAGLV), 37-57 (FGTLSVNLIGSLLLGMFIGAI), 73-93 (TGMMGAFTTFSTFAVESFFLF), and 96-116 (ALYIQALSYILLNVIGCIILA). Residues Gly-77 and Thr-80 each contribute to the Na(+) site.

This sequence belongs to the fluoride channel Fluc/FEX (TC 1.A.43) family.

Its subcellular location is the cell inner membrane. The catalysed reaction is fluoride(in) = fluoride(out). Na(+) is not transported, but it plays an essential structural role and its presence is essential for fluoride channel function. Fluoride-specific ion channel. Important for reducing fluoride concentration in the cell, thus reducing its toxicity. In Nautilia profundicola (strain ATCC BAA-1463 / DSM 18972 / AmH), this protein is Fluoride-specific ion channel FluC.